A 1035-amino-acid polypeptide reads, in one-letter code: Cell-division control histidine kinase PdhS (1035 aa).

The tract at residues 1 to 613 (MSGSYPFIDI…HADGSEEPVD (613 aa)) is important for polar localization. Residues 500 to 533 (QGLANTRAESETPVSETSSIEPVEPTPPVKTRSE) form a disordered region. Residues 614-1035 (AHLNAIAWRG…VFPPTRVLAD (422 aa)) form an interaction with DivK region. The PAS domain maps to 659 to 730 (HVEELKTILD…YLHGLSGNGV (72 aa)). Positions 802–1031 (RISHEIRTPL…VVEIVFPPTR (230 aa)) constitute a Histidine kinase domain. The residue at position 805 (His-805) is a Phosphohistidine; by autocatalysis.

In terms of assembly, interacts with DivK.

It is found in the cytoplasm. It carries out the reaction ATP + protein L-histidine = ADP + protein N-phospho-L-histidine.. Its function is as follows. Functions as a polar differentiation marker. Essential protein that, by localizing in the old pole of dividing cells, controls cell division and maturation, probably through control of DivK phosphorylation status and cellular distribution, which in turn regulates CtrA, a transcriptional regulator of the minB operon. The asymmetrical localization of this protein is probably required for cells to enter a new division cycle. The sequence is that of Cell-division control histidine kinase PdhS (pdhS) from Brucella suis biovar 1 (strain 1330).